A 512-amino-acid chain; its full sequence is Glycine betaine transporter OpuD (512 aa).

Transmembrane regions (helical) follow at residues 5–25 (ISSV…WGVI), 45–65 (FGWY…FLIF), 82–102 (FGLL…GLVF), 135–155 (FFHW…CIAY), 186–206 (IDCI…GLGA), 222–242 (AFIV…LSAW), 257–277 (MVLA…VLIM), 312–332 (WTIF…IFIA), 343–363 (FLIG…SIFG), 395–415 (LTMV…ITSA), 441–461 (WGII…LAAL), and 464–484 (TAIL…ASLY).

Belongs to the BCCT transporter (TC 2.A.15) family.

It localises to the cell membrane. Activity is stimulated by high osmolarity. In terms of biological role, high-affinity uptake of glycine betaine. Does not mediate either carnitine or choline uptake. This is Glycine betaine transporter OpuD (opuD) from Bacillus subtilis (strain 168).